The chain runs to 472 residues: Velvet complex subunit umv2 (472 aa).

Basic and acidic residues-rich tracts occupy residues 1–10 (MSRSDTDGRD), 29–59 (SQRR…DSHG), 67–80 (YSRD…HRGD), and 89–105 (SYQR…EQER). 3 disordered regions span residues 1–121 (MSRS…PLEA), 281–327 (CDDG…QFGG), and 433–472 (SQGI…EDDE). Positions 106-116 (SYGGASASRSS) are enriched in low complexity. The 284-residue stretch at 158–441 (ENGRRYRLVV…ASQGIKIPVR (284 aa)) folds into the Velvet domain. Over residues 286–298 (RSSTHPQHASEST) the composition is skewed to polar residues. A compositionally biased stretch (gly residues) spans 456 to 466 (DGMGDYDGASG).

It belongs to the velvet family. VelB subfamily. As to quaternary structure, component of the heterotrimeric velvet complex composed of laeA, veA and velB; VeA acting as a bridging protein between laeA and velB. Forms a heterodimeric complex with vosA; the formation of the velB-vosA complex is light-dependent.

The protein localises to the nucleus. It localises to the cytoplasm. Its function is as follows. Component of the velvet transcription factor complex that controls sexual/asexual developmental ratio in response to light, promoting sexual development in the darkness while stimulating asexual sporulation under illumination. The velvet complex acts as a global regulator for secondary metabolite gene expression. Component of the velB-VosA heterodimeric complex that plays a dual role in activating genes associated with spore maturation and repressing certain development-associated genes. The velB-VosA complex binds DNA through the DNA-binding domain of vosA that recognizes an 11-nucleotide consensus sequence 5'-CTGGCCGCGGC-3' consisting of two motifs in the promoters of key developmental regulatory genes. Required for full virulence on seedlings. This Mycosarcoma maydis (Corn smut fungus) protein is Velvet complex subunit umv2.